The following is a 455-amino-acid chain: Retinoic acid receptor beta (455 aa).

Positions 1 to 87 (MTTSSRTCPV…PLPPPRVYKP (87 aa)) are modulating. The interval 45–78 (QSHPPTSGCSTPSPASVETQSTSSEELVPSPPSP) is disordered. Over residues 47–66 (HPPTSGCSTPSPASVETQST) the composition is skewed to polar residues. 2 NR C4-type zinc fingers span residues 88–108 (CFVCQDKSSGYHYGVSACEGC) and 124–148 (CHRDKNCVINKVTRNRCQYCRLQKC). Positions 88-153 (CFVCQDKSSG…RLQKCFEVGM (66 aa)) form a DNA-binding region, nuclear receptor. Positions 154–182 (SKESVRNDRNKKKKEPTKQESTENYEMTA) are hinge. The region spanning 183–417 (ELDDLTEKIR…PLIQEMLENS (235 aa)) is the NR LBD domain. Residues 416-455 (NSEGHEPLTPTSNGNTAEHSPSISPSSVDNSSVSQSPMVQ) form a disordered region. The segment covering 424–434 (TPTSNGNTAEH) has biased composition (polar residues). Residues 435-455 (SPSISPSSVDNSSVSQSPMVQ) are compositionally biased toward low complexity.

Belongs to the nuclear hormone receptor family. NR1 subfamily. In terms of assembly, heterodimer; with a RXR molecule. Binds DNA preferentially as a RAR/RXR heterodimer. Both isoforms expressed in heart, lung, kidney, liver, brain, lung and testis. Isoform Beta-1 is highly expressed in testes and brain. Levels increase during testes maturation. Isoform beta-2 is predominant in heart, kidney and lung.

Its subcellular location is the nucleus. Functionally, receptor for retinoic acid. Retinoic acid receptors bind as heterodimers to their target response elements in response to their ligands, all-trans or 9-cis retinoic acid, and regulate gene expression in various biological processes. The RAR/RXR heterodimers bind to the retinoic acid response elements (RARE) composed of tandem 5'-AGGTCA-3' sites known as DR1-DR5. May be required for Sertoli cell differentiation and spermatogenesis. The chain is Retinoic acid receptor beta (RARB) from Coturnix japonica (Japanese quail).